The primary structure comprises 308 residues: tRNA dimethylallyltransferase (308 aa).

Residue 17–24 participates in ATP binding; it reads GPTGSGKS. 19 to 24 provides a ligand contact to substrate; sequence TGSGKS.

Belongs to the IPP transferase family. As to quaternary structure, monomer. It depends on Mg(2+) as a cofactor.

It carries out the reaction adenosine(37) in tRNA + dimethylallyl diphosphate = N(6)-dimethylallyladenosine(37) in tRNA + diphosphate. In terms of biological role, catalyzes the transfer of a dimethylallyl group onto the adenine at position 37 in tRNAs that read codons beginning with uridine, leading to the formation of N6-(dimethylallyl)adenosine (i(6)A). In Paenarthrobacter aurescens (strain TC1), this protein is tRNA dimethylallyltransferase.